A 175-amino-acid polypeptide reads, in one-letter code: NADH-ubiquinone oxidoreductase chain 6 (175 aa).

5 consecutive transmembrane segments (helical) span residues 1 to 21 (MMLY…VGFS), 25 to 45 (SPIY…GIVL), 47 to 67 (FGGS…MMVV), 88 to 108 (AVLG…YYVL), and 149 to 169 (YGTW…VVIM).

It belongs to the complex I subunit 6 family. In terms of assembly, core subunit of respiratory chain NADH dehydrogenase (Complex I) which is composed of 45 different subunits.

The protein resides in the mitochondrion inner membrane. It catalyses the reaction a ubiquinone + NADH + 5 H(+)(in) = a ubiquinol + NAD(+) + 4 H(+)(out). Functionally, core subunit of the mitochondrial membrane respiratory chain NADH dehydrogenase (Complex I) which catalyzes electron transfer from NADH through the respiratory chain, using ubiquinone as an electron acceptor. Essential for the catalytic activity and assembly of complex I. This Bos mutus grunniens (Wild yak) protein is NADH-ubiquinone oxidoreductase chain 6 (MT-ND6).